The following is a 642-amino-acid chain: Threonine--tRNA ligase (642 aa).

In terms of domain architecture, TGS spans 1-61 (MPVITLPDGS…ENDATLAIIT (61 aa)). Residues 243–534 (DHRKIGKQLD…LTEEFAGFFP (292 aa)) form a catalytic region. Cys-334, His-385, and His-511 together coordinate Zn(2+).

Belongs to the class-II aminoacyl-tRNA synthetase family. As to quaternary structure, homodimer. Zn(2+) is required as a cofactor.

It is found in the cytoplasm. It carries out the reaction tRNA(Thr) + L-threonine + ATP = L-threonyl-tRNA(Thr) + AMP + diphosphate + H(+). Its function is as follows. Catalyzes the attachment of threonine to tRNA(Thr) in a two-step reaction: L-threonine is first activated by ATP to form Thr-AMP and then transferred to the acceptor end of tRNA(Thr). Also edits incorrectly charged L-seryl-tRNA(Thr). This is Threonine--tRNA ligase from Salmonella gallinarum (strain 287/91 / NCTC 13346).